Here is a 323-residue protein sequence, read N- to C-terminus: MSNLKQLRTRIKSVKSTQKITKAMQLVSASKMAKIKSQIANSNFYIEAVSKMMSAILSIDMYELSIEEQKFFNTVPNKANLLIVMTSQRGLCGTFNYSIIKQVKNDIKELENKGEQIKLIIIGKKGYEALKRQYVNYIDSYFELPKIHDENLMLQVKQKIMSAVENLEVSNCVIYFNKFKNAMTQIMTRQQILPVAKYQDDSMIDNPIVNLVGFGYKERGVKPINNRRATSDIVGESKSIDYNYEYEGESLISNLINLYVNSQINYALLQSRASEEGARMTAMENATNNANDLISKLVLKLNRSRQAIITTELIEIIAGSEVV.

The segment at 206 to 240 (NPIVNLVGFGYKERGVKPINNRRATSDIVGESKSI) is insert.

This sequence belongs to the ATPase gamma chain family. F-type ATPases have 2 components, CF(1) - the catalytic core - and CF(0) - the membrane proton channel. CF(1) has five subunits: alpha(3), beta(3), gamma(1), delta(1), epsilon(1). CF(0) has three main subunits: a, b and c.

It is found in the cell inner membrane. Functionally, produces ATP from ADP in the presence of a proton gradient across the membrane. The gamma chain is believed to be important in regulating ATPase activity and the flow of protons through the CF(0) complex. This chain is ATP synthase gamma chain, found in Rickettsia conorii (strain ATCC VR-613 / Malish 7).